The following is a 396-amino-acid chain: Methionine import ATP-binding protein MetN 2 (396 aa).

An ABC transporter domain is found at 41–280 (VSFELVGKVF…PRHGATRALL (240 aa)). 77-84 (GRSGAGKS) serves as a coordination point for ATP.

Belongs to the ABC transporter superfamily. Methionine importer (TC 3.A.1.24) family. The complex is composed of two ATP-binding proteins (MetN), two transmembrane proteins (MetI) and a solute-binding protein (MetQ).

Its subcellular location is the cell inner membrane. The catalysed reaction is L-methionine(out) + ATP + H2O = L-methionine(in) + ADP + phosphate + H(+). It carries out the reaction D-methionine(out) + ATP + H2O = D-methionine(in) + ADP + phosphate + H(+). In terms of biological role, part of the ABC transporter complex MetNIQ involved in methionine import. Responsible for energy coupling to the transport system. The chain is Methionine import ATP-binding protein MetN 2 from Burkholderia pseudomallei (strain 1710b).